The following is a 586-amino-acid chain: Actin-related protein 9 (586 aa).

The segment at 141 to 169 (STPIVDKDADVDPLQRSTPDDTEPNSEEN) is disordered.

Belongs to the actin family. ARP8 subfamily.

This Oryza sativa subsp. japonica (Rice) protein is Actin-related protein 9 (ARP9).